The chain runs to 473 residues: Ribulose bisphosphate carboxylase large chain (473 aa).

The propeptide occupies 1 to 2 (MS). N-acetylproline is present on Pro3. Lys14 carries the post-translational modification N6,N6,N6-trimethyllysine. Asn123 and Thr173 together coordinate substrate. Lys175 (proton acceptor) is an active-site residue. Lys177 is a substrate binding site. Lys201, Asp203, and Glu204 together coordinate Mg(2+). Lys201 carries the N6-carboxylysine modification. His294 (proton acceptor) is an active-site residue. Substrate contacts are provided by Arg295, His327, and Ser379.

The protein belongs to the RuBisCO large chain family. Type I subfamily. Heterohexadecamer of 8 large chains and 8 small chains; disulfide-linked. The disulfide link is formed within the large subunit homodimers. Mg(2+) is required as a cofactor. In terms of processing, the disulfide bond which can form in the large chain dimeric partners within the hexadecamer appears to be associated with oxidative stress and protein turnover.

It is found in the plastid. The protein resides in the chloroplast. It catalyses the reaction 2 (2R)-3-phosphoglycerate + 2 H(+) = D-ribulose 1,5-bisphosphate + CO2 + H2O. It carries out the reaction D-ribulose 1,5-bisphosphate + O2 = 2-phosphoglycolate + (2R)-3-phosphoglycerate + 2 H(+). Its function is as follows. RuBisCO catalyzes two reactions: the carboxylation of D-ribulose 1,5-bisphosphate, the primary event in carbon dioxide fixation, as well as the oxidative fragmentation of the pentose substrate in the photorespiration process. Both reactions occur simultaneously and in competition at the same active site. The sequence is that of Ribulose bisphosphate carboxylase large chain from Sesbania sesban (Egyptian riverhemp).